The chain runs to 355 residues: Small ribosomal subunit protein uS2 (355 aa).

The protein belongs to the universal ribosomal protein uS2 family.

The protein is Small ribosomal subunit protein uS2 of Methylobacterium radiotolerans (strain ATCC 27329 / DSM 1819 / JCM 2831 / NBRC 15690 / NCIMB 10815 / 0-1).